Consider the following 135-residue polypeptide: Endoribonuclease YbeY (135 aa).

Residues H94, H98, and H104 each coordinate Zn(2+).

Belongs to the endoribonuclease YbeY family. Zn(2+) is required as a cofactor.

It is found in the cytoplasm. Single strand-specific metallo-endoribonuclease involved in late-stage 70S ribosome quality control and in maturation of the 3' terminus of the 16S rRNA. The protein is Endoribonuclease YbeY of Campylobacter jejuni subsp. jejuni serotype O:2 (strain ATCC 700819 / NCTC 11168).